The primary structure comprises 569 residues: 4-hydroxy-7-methoxy-3-oxo-3,4-dihydro-2H-1,4-benzoxazin-2-yl glucoside beta-D-glucosidase 1b, chloroplastic (569 aa).

A chloroplast-targeting transit peptide spans 1-50 (MALLAAATLNPTTHLSLRSRAGRNSENLWLRSTASSQKSKGRFCNLTIRA). Residues Q92, H194, and 239-240 (NE) each bind a beta-D-glucoside. E240 serves as the catalytic Proton donor. C259 and C265 form a disulfide bridge. A beta-D-glucoside contacts are provided by residues Y383, E456, W504, 511–512 (EW), and F520. Catalysis depends on E456, which acts as the Nucleophile.

This sequence belongs to the glycosyl hydrolase 1 family. Homo- and heterohexamers. Expressed in young seedlings early after germination.

It is found in the plastid. Its subcellular location is the chloroplast. The catalysed reaction is Hydrolysis of terminal, non-reducing beta-D-glucosyl residues with release of beta-D-glucose.. The enzyme catalyses DIMBOA beta-D-glucoside + H2O = DIMBOA + D-glucose. It carries out the reaction DIBOA beta-D-glucoside + H2O = DIBOA + D-glucose. Functionally, acts in defense of young plant parts against pests via the production of hydroxamic acids from hydroxamic acid glucosides. Enzymatic activity is highly correlated with plant growth. The preferred substrate is DIMBOA-beta-D-glucoside. The chain is 4-hydroxy-7-methoxy-3-oxo-3,4-dihydro-2H-1,4-benzoxazin-2-yl glucoside beta-D-glucosidase 1b, chloroplastic (GLU1B) from Triticum aestivum (Wheat).